The primary structure comprises 154 residues: 3-hydroxyacyl-[acyl-carrier-protein] dehydratase FabZ (154 aa).

Histidine 60 is a catalytic residue.

It belongs to the thioester dehydratase family. FabZ subfamily.

The protein localises to the cytoplasm. The catalysed reaction is a (3R)-hydroxyacyl-[ACP] = a (2E)-enoyl-[ACP] + H2O. In terms of biological role, involved in unsaturated fatty acids biosynthesis. Catalyzes the dehydration of short chain beta-hydroxyacyl-ACPs and long chain saturated and unsaturated beta-hydroxyacyl-ACPs. The sequence is that of 3-hydroxyacyl-[acyl-carrier-protein] dehydratase FabZ from Actinobacillus pleuropneumoniae serotype 5b (strain L20).